The sequence spans 1256 residues: Neuronal cell adhesion molecule (1256 aa).

Residues 1–29 form the signal peptide; it reads MQLKIMPKKKHLSAGGVPLILFLCQMISA. The Extracellular portion of the chain corresponds to 30–1119; the sequence is LDVPLDLVQP…ASRQVDIATQ (1090 aa). 2 Ig-like C2-type domains span residues 40–128 and 135–229; these read PTIT…AAVS and PSRS…QPIS. Intrachain disulfides connect C62–C117 and C161–C212. A glycan (N-linked (GlcNAc...) asparagine) is linked at N77. Residues N217, N239, N245, N270, N308, and N371 are each glycosylated (N-linked (GlcNAc...) asparagine). 4 consecutive Ig-like C2-type domains span residues 261–350, 355–442, 448–535, and 539–626; these read PPTF…ISVT, PYWI…AFVN, PRIL…VHLE, and PTRI…AVLR. Cysteines 286 and 334 form a disulfide. Cysteines 376 and 426 form a disulfide. 2 N-linked (GlcNAc...) asparagine glycosylation sites follow: N427 and N501. Disulfide bonds link C470-C519 and C561-C610. N-linked (GlcNAc...) asparagine glycans are attached at residues N613, N710, N796, N852, N987, N1003, N1013, and N1067. 4 consecutive Fibronectin type-III domains span residues 643–738, 740–837, 842–944, and 948–1045; these read PPFD…TKAA, PDQN…SGED, APGN…TPEG, and APSS…VDEA. The helical transmembrane segment at 1120 to 1142 threads the bilayer; the sequence is GWFIGLMCAVALLILILLIVCFI. At 1143–1256 the chain is on the cytoplasmic side; that stretch reads RRNKGGKYPV…SPVNAMNSFV (114 aa). Residues 1151 to 1171 are compositionally biased toward basic and acidic residues; sequence PVKEKEDAHADPEIQPMKEDD. Residues 1151-1256 form a disordered region; the sequence is PVKEKEDAHA…SPVNAMNSFV (106 aa). At T1173 the chain carries Phosphothreonine. Y1177 is subject to Phosphotyrosine. S1178 carries the phosphoserine modification. A compositionally biased stretch (basic and acidic residues) spans 1193–1202; that stretch reads PSDRTVKKED. Phosphoserine is present on residues S1203, S1206, S1223, S1242, S1243, and S1247. Positions 1240–1256 are enriched in polar residues; the sequence is NESSEAPSPVNAMNSFV.

It belongs to the immunoglobulin superfamily. L1/neurofascin/NgCAM family. In terms of assembly, constituent of a NFASC/NRCAM/ankyrin-G complex. Detected in a complex with CNTN1 and PTPRB. Interacts with GLDN/gliomedin and MYOC. Detected in sciatic nerve. Detected in brain, especially in the cerebellum Purkinje cell layer, inner granule cell layer and molecular layer (at protein level). Detected in neurons and Schwann cells.

It is found in the cell membrane. It localises to the cell projection. The protein localises to the axon. Its subcellular location is the secreted. Functionally, cell adhesion protein that is required for normal responses to cell-cell contacts in brain and in the peripheral nervous system. Plays a role in neurite outgrowth in response to contactin binding. Plays a role in mediating cell-cell contacts between Schwann cells and axons. Plays a role in the formation and maintenance of the nodes of Ranvier on myelinated axons. Nodes of Ranvier contain clustered sodium channels that are crucial for the saltatory propagation of action potentials along myelinated axons. During development, nodes of Ranvier are formed by the fusion of two heminodes. Required for normal clustering of sodium channels at heminodes; not required for the formation of mature nodes with normal sodium channel clusters. Required, together with GLDN, for maintaining NFASC and sodium channel clusters at mature nodes of Ranvier. In Mus musculus (Mouse), this protein is Neuronal cell adhesion molecule (Nrcam).